The sequence spans 532 residues: Apolipoprotein N-acyltransferase (532 aa).

A run of 6 helical transmembrane segments spans residues 37–57, 75–95, 106–126, 128–148, 179–199, and 207–227; these read IFVA…GAIA, WWFG…ALLV, LAVL…AMIA, LLWS…ALAE, VIGL…PALL, and TGIG…AWTL. The 250-residue stretch at 245 to 494 folds into the CN hydrolase domain; it reads VQPSIAQAMK…VGVVDSYLPS (250 aa). Glutamate 289 functions as the Proton acceptor in the catalytic mechanism. Residue lysine 353 is part of the active site. Residue cysteine 406 is the Nucleophile of the active site. The helical transmembrane segment at 505–525 threads the bilayer; it reads GWIQTVLILLTLLAASVGLIL.

This sequence belongs to the CN hydrolase family. Apolipoprotein N-acyltransferase subfamily.

It is found in the cell inner membrane. The enzyme catalyses N-terminal S-1,2-diacyl-sn-glyceryl-L-cysteinyl-[lipoprotein] + a glycerophospholipid = N-acyl-S-1,2-diacyl-sn-glyceryl-L-cysteinyl-[lipoprotein] + a 2-acyl-sn-glycero-3-phospholipid + H(+). Its pathway is protein modification; lipoprotein biosynthesis (N-acyl transfer). Its function is as follows. Catalyzes the phospholipid dependent N-acylation of the N-terminal cysteine of apolipoprotein, the last step in lipoprotein maturation. This Brucella suis biovar 1 (strain 1330) protein is Apolipoprotein N-acyltransferase.